The following is a 579-amino-acid chain: MRRPPGDGDSTGEGPGNWGLWGAQESRRLCCVGPDRCGQALLQIGINMMALPGGRHLDSVPLQEQRLHFMQVDSVQRWMEDLKLMTECECMCVLQAKPISLEEDTQGDLILAGGPGPGDPLQLLLKRGWVISTELRRIGQKLAQDRWARVHSMSVRLTCHARSMVSEYSTISRTASQEMGQAEKLLMEKCSELSAVTERCLQVENEHVLKSMKACVSETLSLLGEHFGQLLELALTREVQALVRKIDTSDNIYITESTTGNLFGLTQEGAPLCRIIAKEGGVVALFKVCRQDSFRCLYPQALRTLASICCVEEGVHQLEKVDGILCLADILTDESHSEATRAEAAAVVAQVTSPHLSFTQHLTSFLENMEEIVTALIKLCQEASSGEVFLLASAALANITFFDKMACEMLLQLNAIRVLLEACGDKQRVDTPYTRDQIVTILANMSVLEQCGSDIIQENGVQLIMGMLSEKPRSGTPAEVAACERVQQKAAVTLARLCRDPDVAQEAVRLSCMSRLIELCRSPSERNSSDAVLVACLAALRRLAGVCPEGLQDSDFQQLVQPRLVDSFLLCSNMEESFV.

Positions 74–89 (SVQRWMEDLKLMTECE) are important for interaction with GPSM2. Residues 576–579 (ESFV) carry the PDZ-binding motif.

Interacts with ALS2CR19/PAR3B and GPSM1/AGS3. Interacts with F2RL2/PAR3. Interacts with GPSM2/LGN (via TPR repeat region). In terms of tissue distribution, expressed in brain, kidney, liver, testis and skin.

Its subcellular location is the cytoplasm. The protein localises to the cell cortex. In terms of biological role, may function as an adapter linking the Par3 complex to the GPSM1/GPSM2 complex. Involved in spindle orientation during mitosis. May regulate cell proliferation and differentiation in the developing nervous system. May play a role in the asymmetric division of fibroblasts and participate in the process of stratification of the squamous epithelium. The polypeptide is Protein inscuteable homolog (Insc) (Mus musculus (Mouse)).